Reading from the N-terminus, the 189-residue chain is GMP synthase [glutamine-hydrolyzing] subunit A (189 aa).

The Glutamine amidotransferase type-1 domain maps to 3–187 (RIDVIDNHGQ…LSVCDQQSVA (185 aa)). Cys-73 functions as the Nucleophile in the catalytic mechanism. Catalysis depends on residues His-161 and Glu-163.

In terms of assembly, heterodimer composed of a glutamine amidotransferase subunit (A) and a GMP-binding subunit (B).

It catalyses the reaction XMP + L-glutamine + ATP + H2O = GMP + L-glutamate + AMP + diphosphate + 2 H(+). It participates in purine metabolism; GMP biosynthesis; GMP from XMP (L-Gln route): step 1/1. In terms of biological role, catalyzes the synthesis of GMP from XMP. This chain is GMP synthase [glutamine-hydrolyzing] subunit A, found in Haloarcula marismortui (strain ATCC 43049 / DSM 3752 / JCM 8966 / VKM B-1809) (Halobacterium marismortui).